Consider the following 184-residue polypeptide: Peptide deformylase 2 (184 aa).

Residues cysteine 110 and histidine 153 each contribute to the Fe cation site. Glutamate 154 is a catalytic residue. Residue histidine 157 participates in Fe cation binding.

The protein belongs to the polypeptide deformylase family. Fe(2+) serves as cofactor.

The enzyme catalyses N-terminal N-formyl-L-methionyl-[peptide] + H2O = N-terminal L-methionyl-[peptide] + formate. In terms of biological role, removes the formyl group from the N-terminal Met of newly synthesized proteins. Requires at least a dipeptide for an efficient rate of reaction. N-terminal L-methionine is a prerequisite for activity but the enzyme has broad specificity at other positions. The polypeptide is Peptide deformylase 2 (Bacillus anthracis).